Here is a 252-residue protein sequence, read N- to C-terminus: Glucosamine-6-phosphate deaminase (252 aa).

D67 (proton acceptor; for enolization step) is an active-site residue. The active-site For ring-opening step is the N137. The active-site Proton acceptor; for ring-opening step is H139. E144 serves as the catalytic For ring-opening step.

The protein belongs to the glucosamine/galactosamine-6-phosphate isomerase family. NagB subfamily.

The enzyme catalyses alpha-D-glucosamine 6-phosphate + H2O = beta-D-fructose 6-phosphate + NH4(+). It participates in amino-sugar metabolism; N-acetylneuraminate degradation; D-fructose 6-phosphate from N-acetylneuraminate: step 5/5. Functionally, catalyzes the reversible isomerization-deamination of glucosamine 6-phosphate (GlcN6P) to form fructose 6-phosphate (Fru6P) and ammonium ion. The protein is Glucosamine-6-phosphate deaminase of Staphylococcus aureus (strain Mu3 / ATCC 700698).